Here is a 58-residue protein sequence, read N- to C-terminus: Small ribosomal subunit protein bS21 (58 aa).

The interval 34-58 (KREHYEKPSVKRKKKSEAARKRKFK) is disordered. The span at 43–58 (VKRKKKSEAARKRKFK) shows a compositional bias: basic residues.

This sequence belongs to the bacterial ribosomal protein bS21 family.

This is Small ribosomal subunit protein bS21 from Clostridium acetobutylicum (strain ATCC 824 / DSM 792 / JCM 1419 / IAM 19013 / LMG 5710 / NBRC 13948 / NRRL B-527 / VKM B-1787 / 2291 / W).